The sequence spans 211 residues: Probable calcium-binding protein CML11 (211 aa).

Disordered regions lie at residues 1–22 and 40–60; these read MSEPATTTPTPTPAGDHDAAAT and SCSAQQQQQQQQQQEEPLGDD. Positions 44–53 are enriched in low complexity; the sequence is QQQQQQQQQQ. EF-hand domains lie at 60-95, 96-131, 136-171, and 172-207; these read DQLGELREIFRSFDRNGDGSLTQLELGSLLRSLGLK, PSTDELDSLIQRADTNSNGLIEFSEFVALVAPELLY, YSEDQIRRLFNIFDRDGNGFITAAELAHSMAKLGHA, and LTVKELTGMIKEADTDGDGRISFQEFSRAITAAAFD. Asp-73, Asn-75, Asp-77, Ser-79, Glu-84, Asp-109, Asn-111, Asn-113, Glu-120, Asp-149, Asp-151, Asn-153, Glu-160, Asp-185, Asp-187, Asp-189, Arg-191, and Glu-196 together coordinate Ca(2+).

Functionally, potential calcium sensor. The protein is Probable calcium-binding protein CML11 (CML11) of Oryza sativa subsp. japonica (Rice).